A 102-amino-acid polypeptide reads, in one-letter code: Large ribosomal subunit protein mL63 (102 aa).

It belongs to the mitochondrion-specific ribosomal protein mL63 family. Component of the mitochondrial large ribosomal subunit (mt-LSU). Mature mammalian 55S mitochondrial ribosomes consist of a small (28S) and a large (39S) subunit. The 28S small subunit contains a 12S ribosomal RNA (12S mt-rRNA) and 30 different proteins. The 39S large subunit contains a 16S rRNA (16S mt-rRNA), a copy of mitochondrial valine transfer RNA (mt-tRNA(Val)), which plays an integral structural role, and 52 different proteins.

It localises to the mitochondrion. The chain is Large ribosomal subunit protein mL63 (MRPL57) from Homo sapiens (Human).